Reading from the N-terminus, the 113-residue chain is UPF0122 protein SSU98_0878 (113 aa).

It belongs to the UPF0122 family.

Its function is as follows. Might take part in the signal recognition particle (SRP) pathway. This is inferred from the conservation of its genetic proximity to ftsY/ffh. May be a regulatory protein. The protein is UPF0122 protein SSU98_0878 of Streptococcus suis (strain 98HAH33).